A 191-amino-acid polypeptide reads, in one-letter code: MISISETAQAHFAKLLADQAQQTNIRVFVVNPGTSQAECGVSYCPEDAVEDSDIRLNFNGFDGVVDAESAPFLEDAEIDFVTDKMGTQLTLKAPNAKARKISGDASLNERVQHMLETEVNPQLANHGGQVSLVEITAAGIAVLQFGGGCNGCSMIDVTLKEGIEKEMIEKFEEITGVADITEHQAGDHSYY.

[4Fe-4S] cluster-binding residues include C149 and C152.

This sequence belongs to the NfuA family. Homodimer. [4Fe-4S] cluster is required as a cofactor.

Its function is as follows. Involved in iron-sulfur cluster biogenesis. Binds a 4Fe-4S cluster, can transfer this cluster to apoproteins, and thereby intervenes in the maturation of Fe/S proteins. Could also act as a scaffold/chaperone for damaged Fe/S proteins. This chain is Fe/S biogenesis protein NfuA, found in Pseudoalteromonas translucida (strain TAC 125).